Reading from the N-terminus, the 431-residue chain is Tol-Pal system protein TolB (431 aa).

Positions 1-26 (MRLMTKLGFRALVASCLIAAGAAANA) are cleaved as a signal peptide. The tract at residues 411 to 431 (PQILSVQGGSVREPSWGPFMQ) is disordered.

The protein belongs to the TolB family. In terms of assembly, the Tol-Pal system is composed of five core proteins: the inner membrane proteins TolA, TolQ and TolR, the periplasmic protein TolB and the outer membrane protein Pal. They form a network linking the inner and outer membranes and the peptidoglycan layer.

It is found in the periplasm. In terms of biological role, part of the Tol-Pal system, which plays a role in outer membrane invagination during cell division and is important for maintaining outer membrane integrity. This is Tol-Pal system protein TolB from Burkholderia ambifaria (strain ATCC BAA-244 / DSM 16087 / CCUG 44356 / LMG 19182 / AMMD) (Burkholderia cepacia (strain AMMD)).